Here is a 174-residue protein sequence, read N- to C-terminus: ATP-dependent protease subunit HslV (174 aa).

The active site involves threonine 2. 3 residues coordinate Na(+): glycine 157, cysteine 160, and threonine 163.

This sequence belongs to the peptidase T1B family. HslV subfamily. As to quaternary structure, a double ring-shaped homohexamer of HslV is capped on each side by a ring-shaped HslU homohexamer. The assembly of the HslU/HslV complex is dependent on binding of ATP.

It localises to the cytoplasm. The catalysed reaction is ATP-dependent cleavage of peptide bonds with broad specificity.. Its activity is regulated as follows. Allosterically activated by HslU binding. Functionally, protease subunit of a proteasome-like degradation complex believed to be a general protein degrading machinery. In Yersinia pseudotuberculosis serotype I (strain IP32953), this protein is ATP-dependent protease subunit HslV.